A 30-amino-acid chain; its full sequence is Dicynthaurin (30 aa).

Threonine amide is present on threonine 30.

In terms of assembly, homodimer.

It is found in the secreted. Functionally, shows antibacterial activity against both Gram-positive and Gram-negative bacteria. Its antimicrobial activity is optimal at NaCl concentrations below 100 mM, suggesting that the antimicrobial actions of this peptide may take place intracellularly rather than extracellularly. Has no activity against the fungus C.albicans. Has modest hemolytic activity. This chain is Dicynthaurin, found in Halocynthia aurantium (Sea peach).